Consider the following 681-residue polypeptide: DNA-directed RNA polymerase subunit beta' (681 aa).

Residues Cys69, Cys71, Cys87, and Cys90 each contribute to the Zn(2+) site. Mg(2+) contacts are provided by Asp490, Asp492, and Asp494.

Belongs to the RNA polymerase beta' chain family. RpoC1 subfamily. In terms of assembly, in plastids the minimal PEP RNA polymerase catalytic core is composed of four subunits: alpha, beta, beta', and beta''. When a (nuclear-encoded) sigma factor is associated with the core the holoenzyme is formed, which can initiate transcription. It depends on Mg(2+) as a cofactor. Zn(2+) is required as a cofactor.

It is found in the plastid. Its subcellular location is the chloroplast. It catalyses the reaction RNA(n) + a ribonucleoside 5'-triphosphate = RNA(n+1) + diphosphate. In terms of biological role, DNA-dependent RNA polymerase catalyzes the transcription of DNA into RNA using the four ribonucleoside triphosphates as substrates. This Liriodendron tulipifera (Tuliptree) protein is DNA-directed RNA polymerase subunit beta'.